A 95-amino-acid polypeptide reads, in one-letter code: Small ribosomal subunit protein bS6 (95 aa).

It belongs to the bacterial ribosomal protein bS6 family.

Functionally, binds together with bS18 to 16S ribosomal RNA. In Bacillus pumilus (strain SAFR-032), this protein is Small ribosomal subunit protein bS6.